We begin with the raw amino-acid sequence, 66 residues long: Large ribosomal subunit protein uL29 (66 aa).

The protein belongs to the universal ribosomal protein uL29 family.

This chain is Large ribosomal subunit protein uL29, found in Petrotoga mobilis (strain DSM 10674 / SJ95).